We begin with the raw amino-acid sequence, 197 residues long: Nucleoside triphosphate pyrophosphatase (197 aa).

Catalysis depends on Asp-74, which acts as the Proton acceptor.

The protein belongs to the Maf family. Requires a divalent metal cation as cofactor.

The protein localises to the cytoplasm. It carries out the reaction a ribonucleoside 5'-triphosphate + H2O = a ribonucleoside 5'-phosphate + diphosphate + H(+). The enzyme catalyses a 2'-deoxyribonucleoside 5'-triphosphate + H2O = a 2'-deoxyribonucleoside 5'-phosphate + diphosphate + H(+). Its function is as follows. Nucleoside triphosphate pyrophosphatase. May have a dual role in cell division arrest and in preventing the incorporation of modified nucleotides into cellular nucleic acids. This is Nucleoside triphosphate pyrophosphatase from Granulibacter bethesdensis (strain ATCC BAA-1260 / CGDNIH1).